We begin with the raw amino-acid sequence, 40 residues long: MKVRNSLRALKKIPGAQIVRRRGRTFVINKNNPRMKARQG.

The protein belongs to the bacterial ribosomal protein bL36 family.

This chain is Large ribosomal subunit protein bL36A, found in Paenarthrobacter aurescens (strain TC1).